Here is a 66-residue protein sequence, read N- to C-terminus: Large ribosomal subunit protein uL29 (66 aa).

Belongs to the universal ribosomal protein uL29 family.

The polypeptide is Large ribosomal subunit protein uL29 (Thermosipho melanesiensis (strain DSM 12029 / CIP 104789 / BI429)).